A 247-amino-acid chain; its full sequence is Geranylgeranylglyceryl phosphate synthase (247 aa).

2 residues coordinate Mg(2+): Asp23 and Ser52. Residues Tyr171 to Gly177, Gly203 to Gly204, and Gly225 to Thr226 contribute to the sn-glycerol 1-phosphate site.

It belongs to the GGGP/HepGP synthase family. Group II subfamily. Mg(2+) serves as cofactor.

The protein resides in the cytoplasm. It catalyses the reaction sn-glycerol 1-phosphate + (2E,6E,10E)-geranylgeranyl diphosphate = sn-3-O-(geranylgeranyl)glycerol 1-phosphate + diphosphate. It functions in the pathway membrane lipid metabolism; glycerophospholipid metabolism. In terms of biological role, prenyltransferase that catalyzes the transfer of the geranylgeranyl moiety of geranylgeranyl diphosphate (GGPP) to the C3 hydroxyl of sn-glycerol-1-phosphate (G1P). This reaction is the first ether-bond-formation step in the biosynthesis of archaeal membrane lipids. This chain is Geranylgeranylglyceryl phosphate synthase, found in Methanosarcina barkeri (strain Fusaro / DSM 804).